The primary structure comprises 280 residues: Beta carbonic anhydrase 4 (280 aa).

The residue at position 2 (alanine 2) is an N-acetylalanine. A coiled-coil region spans residues 47 to 76; it reads NVAAAKIKALTAELKELDSSNSDAIERIKT. Threonine 57 carries the post-translational modification Phosphothreonine. Phosphoserine is present on serine 117. Cysteine 223 is modified (S-nitrosocysteine).

The protein belongs to the beta-class carbonic anhydrase family. In terms of assembly, interacts with DTX56. Strongly expressed in aerial tissues including leaves, stems, flowers and siliques. Accumulates in both guard cells and mesophyll cells.

Its subcellular location is the cell membrane. The catalysed reaction is hydrogencarbonate + H(+) = CO2 + H2O. Its function is as follows. Reversible hydration of carbon dioxide. Together with BCA1, involved in the CO(2) signaling pathway which controls gas-exchange between plants and the atmosphere by modulating stomatal development and movements. Promotes water use efficiency. In Arabidopsis thaliana (Mouse-ear cress), this protein is Beta carbonic anhydrase 4.